The following is a 303-amino-acid chain: uncharacterized protein (303 aa).

Transmembrane regions (helical) follow at residues 55-77 (FLVK…LFIQ), 92-111 (PAVF…TKII), 208-230 (FSLP…ATSL), and 240-257 (IPHI…KILI).

Its subcellular location is the cell membrane. This is an uncharacterized protein from Bacillus subtilis (strain 168).